A 218-amino-acid polypeptide reads, in one-letter code: MKIILFGPPGVGKGTQAKILSEKHQLAHISTGDMLRSAIKQGTELGLKAKSFIDKGELVPDDVIIGMIEEYVSVQENREQGFILDGFPRTVPQAEALDRLLQKYEIPIDCVISLTADAEEIVARLSGRRIAPSTGKVYHVVYNPPKVEGKCDETGEDLIIREDDKEETIRKRLSIYDQTTAPVLDYYKKKGTAAEVDGTQSIDKVSKEIDEILTSATK.

10-15 (GVGKGT) is an ATP binding site. Residues 30 to 59 (STGDMLRSAIKQGTELGLKAKSFIDKGELV) are NMP. AMP is bound by residues threonine 31, arginine 36, 57 to 59 (ELV), 86 to 89 (GFPR), and glutamine 93. The interval 127–164 (GRRIAPSTGKVYHVVYNPPKVEGKCDETGEDLIIREDD) is LID. ATP-binding positions include arginine 128 and 137–138 (VY). AMP contacts are provided by arginine 161 and arginine 172. Glutamine 200 is a binding site for ATP.

This sequence belongs to the adenylate kinase family. Monomer.

It is found in the cytoplasm. It carries out the reaction AMP + ATP = 2 ADP. It functions in the pathway purine metabolism; AMP biosynthesis via salvage pathway; AMP from ADP: step 1/1. Its function is as follows. Catalyzes the reversible transfer of the terminal phosphate group between ATP and AMP. Plays an important role in cellular energy homeostasis and in adenine nucleotide metabolism. This is Adenylate kinase from Chloroherpeton thalassium (strain ATCC 35110 / GB-78).